The primary structure comprises 171 residues: Non-specific lipid transfer protein GPI-anchored 19 (171 aa).

A signal peptide spans methionine 1–alanine 18. 4 disulfides stabilise this stretch: cysteine 25–cysteine 66, cysteine 35–cysteine 50, cysteine 51–cysteine 93, and cysteine 64–cysteine 103. 2 N-linked (GlcNAc...) asparagine glycosylation sites follow: asparagine 72 and asparagine 82. The interval leucine 113–glutamate 149 is disordered. The segment covering proline 118–serine 141 has biased composition (low complexity). The GPI-anchor amidated serine moiety is linked to residue serine 147. Residue asparagine 148 is glycosylated (N-linked (GlcNAc...) asparagine). Positions asparagine 148–isoleucine 171 are cleaved as a propeptide — removed in mature form.

Belongs to the plant LTP family.

The protein localises to the cell membrane. Functionally, probable lipid transfer protein. This chain is Non-specific lipid transfer protein GPI-anchored 19, found in Arabidopsis thaliana (Mouse-ear cress).